The chain runs to 86 residues: Teretoxin Tsu6.16 (86 aa).

Positions 1–21 are cleaved as a signal peptide; that stretch reads MATSGRLLCVCLVMGLVFESL. A propeptide spanning residues 22–46 is cleaved from the precursor; sequence GYLTGREKRPAENLEASVQRRWYLN.

It belongs to the teretoxin M (TM) superfamily. In terms of processing, contains 3 disulfide bonds. In terms of tissue distribution, expressed by the venom duct.

The protein localises to the secreted. This chain is Teretoxin Tsu6.16, found in Terebra subulata (Chocolate spotted auger).